The following is a 680-amino-acid chain: WD repeat-containing protein 48 homolog (680 aa).

8 WD repeats span residues 26 to 65, 71 to 110, 113 to 152, 164 to 203, 206 to 245, 248 to 287, 290 to 329, and 350 to 389; these read QHRN…SEKY, HHND…CMST, THRD…ALTA, GSKD…RIMK, GHTE…CVQT, VHKE…NKTL, EEQA…RCTL, and KGGA…KKEQ. The interval 592–616 is disordered; that stretch reads ETTPSGGNANNSLQNSQSDANSEGS.

It belongs to the WD repeat WDR48 family. Catalytic component of the Usp12-46 deubiquitylase complex consisting of Usp12-46, Wdr20 and Uaf1; regulatory subunit that, together wtih Wdr20, stabilizes Usp12-46. The Usp12-46 deubiquitylase complex associates with arr/arrow; the interaction leads to deubiquitination and stabilization of arr/arrow.

Its function is as follows. Regulatory component of the Usp12-46 deubiquitylase complex. activates deubiquitination by increasing the catalytic turnover without increasing the affinity of deubiquitinating enzymes for the substrate. The complex deubiquitylates the wg/wingless-signaling receptor arr/arrow, which stabilizes the receptor and increases its concentration at the cell surface; this enhances the sensitivity of cells to wg/wingless-signal stimulation. This increases the amplitude and spatial range of the signaling response to the wg/wingless morphogen gradient, facilitating the precise concentration-dependent regulation of its target genes. Together with Wdr20 and Usp12-46 required for wg/wingless-mediated signaling in the wing imaginal disc and for wg/wingless-dependent regulation of intestinal stem cell proliferation. The protein is WD repeat-containing protein 48 homolog of Drosophila sechellia (Fruit fly).